Consider the following 307-residue polypeptide: Elongation factor Ts (307 aa).

Positions 80–83 (TDFV) are involved in Mg(2+) ion dislocation from EF-Tu.

Belongs to the EF-Ts family.

Its subcellular location is the cytoplasm. Associates with the EF-Tu.GDP complex and induces the exchange of GDP to GTP. It remains bound to the aminoacyl-tRNA.EF-Tu.GTP complex up to the GTP hydrolysis stage on the ribosome. The chain is Elongation factor Ts from Clostridium botulinum (strain Kyoto / Type A2).